Consider the following 343-residue polypeptide: MEAVATATAAKEPDKGCIEPGPGHWGELSRTPVPSKPQDKVEAAEATPVALDSDTSGAENAAVSAMLHAVAASRLPVCSQQQGEPDLTEHEKVAILAQLYHEKPLVFLERFRTGLREEHLACFGHVRGDHRADFYCAEVARQGTARPRTLRTRLRNRRYAALRELIQGGEYFSDEQMRFRAPLLYEQYIGQYLTQEELSARTPTHQPPKPGSPGRPACPLSNLLLQSYEERELQQRLLQQQEEEEACLEEEEEEEDSDEEDQRSGKDSEAWVPDSEERLILREEFTSRMHQRFLDGKDGDFDYSTVDDNPDFDNLDIVARDEEERYFDEEEPEDAPSPELDGD.

N-acetylmethionine is present on Met1. The disordered stretch occupies residues 1 to 37 (MEAVATATAAKEPDKGCIEPGPGHWGELSRTPVPSKP). Thr47 is subject to Phosphothreonine. Disordered stretches follow at residues 200–220 (ARTPTHQPPKPGSPGRPACPL), 234–277 (QQRL…DSEE), and 292–343 (RFLD…LDGD). The stretch at 224–262 (LLQSYEERELQQRLLQQQEEEEACLEEEEEEEDSDEEDQ) forms a coiled coil. The segment covering 241–261 (QEEEEACLEEEEEEEDSDEED) has biased composition (acidic residues). Residues 262–277 (QRSGKDSEAWVPDSEE) show a composition bias toward basic and acidic residues. A phosphoserine mark is found at Ser275 and Ser337. Over residues 324–343 (ERYFDEEEPEDAPSPELDGD) the composition is skewed to acidic residues.

In terms of assembly, associates with splicing factor SF3B complex, involved in branch-site recognition.

It localises to the nucleus. In terms of biological role, may play a role pre-mRNA splicing through the association with the splicing factor SF3B complex which is involved in branch-site recognition. In Homo sapiens (Human), this protein is Coiled-coil domain-containing protein 97 (CCDC97).